We begin with the raw amino-acid sequence, 354 residues long: tRNA-specific 2-thiouridylase MnmA (354 aa).

ATP contacts are provided by residues 6–13 (LLSGGVDS) and Leu33. Cys100 acts as the Nucleophile in catalysis. Cys100 and Cys195 are disulfide-bonded. An ATP-binding site is contributed by Gly123. The tract at residues 145–147 (KDQ) is interaction with tRNA. The active-site Cysteine persulfide intermediate is Cys195.

It belongs to the MnmA/TRMU family.

It is found in the cytoplasm. It carries out the reaction S-sulfanyl-L-cysteinyl-[protein] + uridine(34) in tRNA + AH2 + ATP = 2-thiouridine(34) in tRNA + L-cysteinyl-[protein] + A + AMP + diphosphate + H(+). Catalyzes the 2-thiolation of uridine at the wobble position (U34) of tRNA, leading to the formation of s(2)U34. This chain is tRNA-specific 2-thiouridylase MnmA, found in Borrelia turicatae (strain 91E135).